The following is a 395-amino-acid chain: MASPAPRSLSSSSSSSSSSFCPSISPPPRSPSRASLPFSVKCNTVEPLKLVNGKPSVPILDEQSLPKFLHSKRLESSVNRSNTRLKLFSGLANPALAKEVAWYMGLELGKVKIKRFADGEIYVQLEESVRGCDVFIIQPTSPPANENLMELLIMIDACRRASAKNITAVIPYFGYARADRKTQGRESIAAKLVANLITEAGANRVLACDLHSGQSMGYFDIPVDHVYCQPVILDYLASKGIASSDLVVVSPDVGGVARARAFAKKLSDAPLAIVDKRRHAHNVAEVMNLIGDVKGKVAVMLDDMIDTAGTITKGAELLHEEGAREVYACCTHAVFSPPAIERLSSGCFQEVIITNTLPVAEKNFFRQLTVLSTANLLGETIWRVHDDSSVSSIFQ.

The segment covering 1 to 23 has biased composition (low complexity); it reads MASPAPRSLSSSSSSSSSSFCPS. The tract at residues 1 to 33 is disordered; that stretch reads MASPAPRSLSSSSSSSSSSFCPSISPPPRSPSR. A chloroplast-targeting transit peptide spans 1 to 42; it reads MASPAPRSLSSSSSSSSSSFCPSISPPPRSPSRASLPFSVKC. The Mg(2+) site is built by Asp209, His211, Asp220, and Asp224. The binding of phosphoribosylpyrophosphate stretch occupies residues 295–310; it reads GKVAVMLDDMIDTAGT.

This sequence belongs to the ribose-phosphate pyrophosphokinase family.

It is found in the plastid. The protein localises to the chloroplast. The enzyme catalyses D-ribose 5-phosphate + ATP = 5-phospho-alpha-D-ribose 1-diphosphate + AMP + H(+). This is Ribose-phosphate pyrophosphokinase 2, chloroplastic (PRS2) from Spinacia oleracea (Spinach).